Consider the following 232-residue polypeptide: MTFSVTILTIFPEMFPGFLNYSLAGKALEKKIWNLEIVNIRSFAKDKHSTVDDVPYGGGAGMVMRPDVIGNAVDNVLSAHKNTRFIYMTPSGTKFNQRIAKELTEIPHVTILCGRFEGVDQRVIDVYTPYELSIGDYILSGGEPAAMVVLDACIRLLPGVVNNFDSVAEESFSYSGGILEYPQYTRPEQWSRYKVPEVLLSGNHRKISDWRREQSYVRTKERRPELLNGDDK.

S-adenosyl-L-methionine contacts are provided by residues G114 and 134–139 (IGDYIL).

Belongs to the RNA methyltransferase TrmD family. In terms of assembly, homodimer.

Its subcellular location is the cytoplasm. The catalysed reaction is guanosine(37) in tRNA + S-adenosyl-L-methionine = N(1)-methylguanosine(37) in tRNA + S-adenosyl-L-homocysteine + H(+). Its function is as follows. Specifically methylates guanosine-37 in various tRNAs. This is tRNA (guanine-N(1)-)-methyltransferase from Wolbachia pipientis subsp. Culex pipiens (strain wPip).